Here is a 1905-residue protein sequence, read N- to C-terminus: Low-density lipoprotein receptor-related protein 4 (1905 aa).

The signal sequence occupies residues 1 to 20; the sequence is MRRWWGALLLGALLCAHGTA. Residues 21 to 1723 are Extracellular-facing; sequence SNLECACGRS…VPAAPGEGLH (1703 aa). LDL-receptor class A domains follow at residues 26-67, 70-106, 109-144, 147-183, 190-226, 230-266, 269-305, and 311-350; these read ACGR…DGCT, TCSP…QDCP, ECEE…EQCD, KCSD…ESCP, PCNL…SDCS, PCRS…RNCT, MCTA…ENCE, and QCAS…QNCR. Cystine bridges form between Cys27/Cys44, Cys34/Cys57, Cys51/Cys66, Cys71/Cys83, Cys78/Cys96, Cys90/Cys105, Cys110/Cys122, Cys117/Cys135, Cys129/Cys143, Cys148/Cys160, Cys155/Cys173, Cys167/Cys182, Cys191/Cys203, Cys198/Cys216, Cys210/Cys225, Cys231/Cys243, Cys238/Cys256, Cys250/Cys265, Cys270/Cys282, Cys277/Cys295, Cys289/Cys304, Cys312/Cys324, Cys319/Cys337, Cys331/Cys349, Cys358/Cys369, Cys365/Cys378, Cys380/Cys393, Cys399/Cys409, Cys405/Cys418, and Cys420/Cys433. Asn264 carries N-linked (GlcNAc...) asparagine glycosylation. The region spanning 354-394 is the EGF-like 1; atypical domain; it reads GEENCNVNNGGCAQKCQMIRGAVQCTCHTGYRLTEDGRTCQ. Residues 395–434 form the EGF-like 2; calcium-binding domain; sequence DVNECAEEGYCSQGCTNSEGAFQCWCEAGYELRPDRRSCK. 5 LDL-receptor class B repeats span residues 480–522, 523–565, 566–609, 610–652, and 653–693; these read ELVF…DWVH, DKLY…HPME, GTIY…DYAG, RRMY…FEDS, and LYWT…LHPQ. N-linked (GlcNAc...) asparagine glycosylation is present at Asn498. The EGF-like 3 domain maps to 698–737; that stretch reads GKNRCGDNNGGCTHLCLPSGQNYTCACPTGFRKINSHACA. Intrachain disulfides connect Cys702–Cys713, Cys709–Cys722, and Cys724–Cys736. Asn719 carries an N-linked (GlcNAc...) asparagine glycan. LDL-receptor class B repeat units follow at residues 785 to 827, 828 to 870, 871 to 914, 915 to 956, and 957 to 998; these read DHVY…DWVT, NKLY…EPMG, GYMY…DYGS, QRLY…LYGQ, and RIYW…FHRQ. Asn901 carries an N-linked (GlcNAc...) asparagine glycan. N-linked (GlcNAc...) asparagine glycosylation is present at Asn1077. LDL-receptor class B repeat units follow at residues 1093–1135, 1136–1178, 1179–1222, 1223–1263, 1264–1306, 1397–1439, 1440–1482, 1483–1526, 1527–1568, and 1569–1610; these read GKVY…DAIG, RKVY…YHEM, GFMY…DKTS, SQLL…LLDS, YIYW…DRAQ, GKVY…DWVA, RNLY…FPRK, GYLF…DYDT, RRIY…QDRW, and IYWT…SPQR. N-linked (GlcNAc...) asparagine glycans are attached at residues Asn1415 and Asn1467. The segment at 1659 to 1696 is disordered; that stretch reads PRATSLNEKSPVLPNTLPTTLHSSTTRTRTSPEGAEGR. A compositionally biased stretch (low complexity) spans 1671–1690; that stretch reads LPNTLPTTLHSSTTRTRTSP. Residues 1724–1746 traverse the membrane as a helical segment; the sequence is VSYAVGGLLSVLLILLVTAALML. Over 1747–1905 the chain is Cytoplasmic; sequence YRHRKSKFTD…ERKLSSESQV (159 aa). The tract at residues 1853 to 1905 is disordered; the sequence is SSGSLDDTETEQLLQEEQSECSSVHTATTPERRGSLPDTGWKHERKLSSESQV. Over residues 1872-1881 the composition is skewed to polar residues; it reads ECSSVHTATT. The segment covering 1882 to 1905 has biased composition (basic and acidic residues); the sequence is PERRGSLPDTGWKHERKLSSESQV.

The protein belongs to the LDLR family. In terms of assembly, homooligomer. Interacts with MUSK; the heterodimer forms an AGRIN receptor complex that binds AGRIN resulting in activation of MUSK. Interacts (via the extracellular domain) with SOST; the interaction facilitates the inhibition of Wnt signaling. Interacts with MESD; the interaction promotes glycosylation of LRP4 and its cell-surface expression. N-glycosylation is required for cell surface location. As to expression, expressed in different regions of the brain, mainly in the olfactory bulb, at lower level in the cerebral cortex and hippocampus.

Its subcellular location is the cell membrane. Functionally, mediates SOST-dependent inhibition of bone formation. Functions as a specific facilitator of SOST-mediated inhibition of Wnt signaling. Plays a key role in the formation and the maintenance of the neuromuscular junction (NMJ), the synapse between motor neuron and skeletal muscle. Directly binds AGRIN and recruits it to the MUSK signaling complex. Mediates the AGRIN-induced phosphorylation of MUSK, the kinase of the complex. The activation of MUSK in myotubes induces the formation of NMJ by regulating different processes including the transcription of specific genes and the clustering of AChR in the postsynaptic membrane. Alternatively, may be involved in the negative regulation of the canonical Wnt signaling pathway, being able to antagonize the LRP6-mediated activation of this pathway. More generally, has been proposed to function as a cell surface endocytic receptor binding and internalizing extracellular ligands for degradation by lysosomes. Plays an essential role in the process of digit differentiation. In Rattus norvegicus (Rat), this protein is Low-density lipoprotein receptor-related protein 4 (Lrp4).